The sequence spans 400 residues: PHD finger protein 24 (400 aa).

Residue G2 is the site of N-myristoyl glycine attachment. The span at 28–38 (LRDRPSIRRTG) shows a compositional bias: basic and acidic residues. The interval 28 to 99 (LRDRPSIRRT…PEEFDRTSRF (72 aa)) is disordered. Position 36 is an omega-N-methylarginine (R36). S43 is subject to Phosphoserine. The residue at position 47 (T47) is a Phosphothreonine. S51 is subject to Phosphoserine. Positions 78–97 (AWERLRDGRGVEPEEFDRTS) are enriched in basic and acidic residues. The PHD-type zinc finger occupies 129 to 190 (NDEMCDVCEV…TGWSCHYCDN (62 aa)).

This Homo sapiens (Human) protein is PHD finger protein 24.